The sequence spans 55 residues: uncharacterized protein (55 aa).

This is an uncharacterized protein from Bacillus subtilis (strain 168).